We begin with the raw amino-acid sequence, 134 residues long: Small ribosomal subunit protein uS8c (134 aa).

The protein belongs to the universal ribosomal protein uS8 family. Part of the 30S ribosomal subunit.

The protein localises to the plastid. One of the primary rRNA binding proteins, it binds directly to 16S rRNA central domain where it helps coordinate assembly of the platform of the 30S subunit. This Epifagus virginiana (Beechdrops) protein is Small ribosomal subunit protein uS8c (rps8).